Here is a 263-residue protein sequence, read N- to C-terminus: Endonuclease 8 (263 aa).

The active-site Schiff-base intermediate with DNA is the Pro-2. Glu-3 serves as the catalytic Proton donor. The active-site Proton donor; for beta-elimination activity is Lys-53. Residues Gln-70, Arg-125, and Asn-169 each coordinate DNA. The FPG-type zinc finger occupies 229 to 263 (KVFHRDGEPCERCGGIIEKTTLSSRPFYWCPGCQH). The Proton donor; for delta-elimination activity role is filled by Arg-253.

This sequence belongs to the FPG family. Zn(2+) serves as cofactor.

The catalysed reaction is 2'-deoxyribonucleotide-(2'-deoxyribose 5'-phosphate)-2'-deoxyribonucleotide-DNA = a 3'-end 2'-deoxyribonucleotide-(2,3-dehydro-2,3-deoxyribose 5'-phosphate)-DNA + a 5'-end 5'-phospho-2'-deoxyribonucleoside-DNA + H(+). Its function is as follows. Involved in base excision repair of DNA damaged by oxidation or by mutagenic agents. Acts as a DNA glycosylase that recognizes and removes damaged bases. Has a preference for oxidized pyrimidines, such as thymine glycol, 5,6-dihydrouracil and 5,6-dihydrothymine. Has AP (apurinic/apyrimidinic) lyase activity and introduces nicks in the DNA strand. Cleaves the DNA backbone by beta-delta elimination to generate a single-strand break at the site of the removed base with both 3'- and 5'-phosphates. The chain is Endonuclease 8 from Escherichia coli O127:H6 (strain E2348/69 / EPEC).